Reading from the N-terminus, the 270-residue chain is Protein-ADP-ribose hydrolase (270 aa).

One can recognise a Macro domain in the interval 73–267 (VSVKDCQKTN…LYDTYLQKEN (195 aa)). Asp-92, Ile-93, and Asn-106 together coordinate ADP-D-ribose. Residues Cys-112, His-117, and Cys-119 each contribute to the Zn(2+) site. Cys-119, Ile-120, Asp-121, Ser-212, Thr-213, Gly-214, Glu-215, and Phe-216 together coordinate ADP-D-ribose.

Belongs to the MacroD-type family. Zn-Macro subfamily. Zn(2+) is required as a cofactor.

It catalyses the reaction 4-O-(ADP-D-ribosyl)-L-aspartyl-[protein] + H2O = L-aspartyl-[protein] + ADP-D-ribose + H(+). In terms of biological role, ADP-ribosylhydrolase that specifically reverses the SirTM-mediated mono-ADP-ribosylation at an asparatate residue of GcvH-L, by releasing ADP-ribose from the target protein. May play a role in the regulation of the response to host-induced oxidative stress. In Streptococcus pyogenes serotype M6 (strain ATCC BAA-946 / MGAS10394), this protein is Protein-ADP-ribose hydrolase.